Reading from the N-terminus, the 205-residue chain is Large ribosomal subunit protein uL4 (205 aa).

The segment at 56 to 76 is disordered; it reads VSGTTAKPYRQKHTGRARQGS.

The protein belongs to the universal ribosomal protein uL4 family. Part of the 50S ribosomal subunit.

Its function is as follows. One of the primary rRNA binding proteins, this protein initially binds near the 5'-end of the 23S rRNA. It is important during the early stages of 50S assembly. It makes multiple contacts with different domains of the 23S rRNA in the assembled 50S subunit and ribosome. Forms part of the polypeptide exit tunnel. This Ehrlichia ruminantium (strain Welgevonden) protein is Large ribosomal subunit protein uL4.